Consider the following 39-residue polypeptide: Photosystem II reaction center protein Psb30 (39 aa).

Residues 12–32 (IFQLTFVGLIVIAGPIVIAVL) form a helical membrane-spanning segment.

It belongs to the Psb30/Ycf12 family. PSII is composed of 1 copy each of membrane proteins PsbA, PsbB, PsbC, PsbD, PsbE, PsbF, PsbH, PsbI, PsbJ, PsbK, PsbL, PsbM, PsbT, PsbX, PsbY, PsbZ, Psb30/Ycf12, peripheral proteins PsbO, CyanoQ (PsbQ), PsbU, PsbV and a large number of cofactors. It forms dimeric complexes.

The protein localises to the cellular thylakoid membrane. Functionally, a core subunit of photosystem II (PSII), probably helps stabilize the reaction center. The protein is Photosystem II reaction center protein Psb30 of Crocosphaera subtropica (strain ATCC 51142 / BH68) (Cyanothece sp. (strain ATCC 51142)).